The following is a 180-amino-acid chain: Cell number regulator 7 (180 aa).

The helical transmembrane segment at 80-102 threads the bilayer; it reads AAAGAIYTLLACFTGFQCHWIYS.

The protein belongs to the cornifelin family. As to expression, expressed in roots, leaves, immature ears and silks. Detected preferentially in silks.

It localises to the membrane. In Zea mays (Maize), this protein is Cell number regulator 7 (CNR7).